The sequence spans 118 residues: MFEPFLLAVEGQEFLTGFHVEGPLAGLIIILIALLLLWIFKKVLKLVVVLIGAVVGYFVGEAVEPSLSLVFAAGFAIVGIWAMSGDKSKKKGKKQRSILKDADDWDDDSWDDEGDWDE.

Helical transmembrane passes span 20-39 (VEGPLAGLIIILIALLLLWI), 46-63 (LVVVLIGAVVGYFVGEAV), and 67-85 (LSLVFAAGFAIVGIWAMSG). The disordered stretch occupies residues 85–118 (GDKSKKKGKKQRSILKDADDWDDDSWDDEGDWDE). Residues 88 to 97 (SKKKGKKQRS) show a composition bias toward basic residues. Residues 103 to 118 (DDWDDDSWDDEGDWDE) show a composition bias toward acidic residues.

It is found in the cell membrane. This is an uncharacterized protein from Archaeoglobus fulgidus (strain ATCC 49558 / DSM 4304 / JCM 9628 / NBRC 100126 / VC-16).